The sequence spans 853 residues: Vacuolar protein sorting-associated protein 41 homolog (853 aa).

Residues 1 to 25 (MAEAEEQETESLEESTDESEEESEE) show a composition bias toward acidic residues. A disordered region spans residues 1-32 (MAEAEEQETESLEESTDESEEESEEEPKLKYE). The segment at 1 to 539 (MAEAEEQETE…YLTLRHKDVF (539 aa)) is interaction with ARL8B. Residues 567–711 (VDMLLDNEDK…SIDKPPFITG (145 aa)) form a CHCR repeat. An RING-type; atypical zinc finger spans residues 790-838 (CESCLSPILPTDAAKPFSVVVFHCRHMFHKECLPMPSMNAPAQYCNICS).

The protein belongs to the VPS41 family. Component of the putative homotypic fusion and vacuole protein sorting (HOPS) complex; the core of which composed of the class C Vps proteins VPS11, VPS16, VPS18 and VPS33A, is associated with VPS39 and VPS41. Interacts with RILP, MON1B. Interacts with ARL8B (GTP-bound form); involved in recruitment to lysosomes and probably hierarchial assembly of the HOPS complex at lysosomal membranes. In vitro can self-assemble into a lattice. Associates with adapter protein complex 3 (AP-3) and clathrin:AP-3 complexes. Interacts with STX17; this interaction is increased in the absence of TMEM39A. Interacts with ARL8B and PLEKHM1; the interaction mediates the recruitment of the HOPS complex to lysosomes. Interacts with RAB7, RAB2A and RAB2B. Interacts with RAB39A (GTP-bound) and RAB39B (GTP-bound); interaction with RAB39A leads to a functional HOPS complex that mediates autophagosome-lysosome membrane tethering.

The protein localises to the endosome membrane. Its subcellular location is the late endosome membrane. It is found in the early endosome membrane. The protein resides in the lysosome membrane. It localises to the golgi apparatus. The protein localises to the trans-Golgi network. Its subcellular location is the cytoplasmic vesicle. It is found in the clathrin-coated vesicle. The protein resides in the cytoplasm. It localises to the cytosol. In terms of biological role, plays a role in vesicle-mediated protein trafficking to lysosomal compartments including the endocytic membrane transport and autophagic pathways. Believed to act in part as a core component of the putative HOPS endosomal tethering complex is proposed to be involved in the Rab5-to-Rab7 endosome conversion probably implicating MON1A/B, and via binding SNAREs and SNARE complexes to mediate tethering and docking events during SNARE-mediated membrane fusion. The HOPS complex is proposed to be recruited to Rab7 on the late endosomal membrane and to regulate late endocytic, phagocytic and autophagic traffic towards lysosomes. Involved in homotypic vesicle fusions between late endosomes and in heterotypic fusions between late endosomes and lysosomes implicated in degradation of endocytosed cargo. Required for fusion of autophagosomes with lysosomes. Links the HOPS complex to endosomal via its association with RILP and to lysosomal membranes via its association with ARL8B, suggesting that these interactions may bring the compartments to close proximity for fusion. Involved in the direct trans-Golgi network to late endosomes transport of lysosomal membrane proteins independently of HOPS. Involved in sorting to the regulated secretory pathway presumably implicating the AP-3 adapter complex. May play a role in HOPS-independent function in the regulated secretory pathway. This is Vacuolar protein sorting-associated protein 41 homolog (Vps41) from Mus musculus (Mouse).